The sequence spans 366 residues: Putative [LysW]-aminoadipate semialdehyde/glutamate semialdehyde transaminase (366 aa).

Pyridoxal 5'-phosphate contacts are provided by residues 90-91 (GT) and Phe117. Arg120 contacts substrate. Position 202–205 (202–205 (DEVQ)) interacts with pyridoxal 5'-phosphate. Lys230 is subject to N6-(pyridoxal phosphate)lysine. Ser254 contacts substrate. Thr255 contacts pyridoxal 5'-phosphate.

The protein belongs to the class-III pyridoxal-phosphate-dependent aminotransferase family. LysJ subfamily. Homodimer. It depends on pyridoxal 5'-phosphate as a cofactor.

It is found in the cytoplasm. The catalysed reaction is [amino-group carrier protein]-C-terminal-gamma-(L-lysyl)-L-glutamate + 2-oxoglutarate = [amino-group carrier protein]-C-terminal-N-(1-carboxy-5-oxopentan-1-yl)-L-glutamine + L-glutamate. It carries out the reaction [amino-group carrier protein]-C-terminal-gamma-(L-ornithyl)-L-glutamate + 2-oxoglutarate = [amino-group carrier protein]-C-terminal-gamma-(L-glutamyl-5-semialdehyde)-L-glutamate + L-glutamate. The protein operates within amino-acid biosynthesis; L-lysine biosynthesis via AAA pathway; L-lysine from L-alpha-aminoadipate (Thermus route): step 4/5. It participates in amino-acid biosynthesis; L-arginine biosynthesis. Functionally, involved in both the arginine and lysine biosynthetic pathways. This chain is Putative [LysW]-aminoadipate semialdehyde/glutamate semialdehyde transaminase, found in Pyrococcus furiosus (strain ATCC 43587 / DSM 3638 / JCM 8422 / Vc1).